Consider the following 660-residue polypeptide: MAGLIPQSFIDDLINRLDIVDVVSSRVQLKKTGKNYSACCPFHKEKTPSFTVSPDKQFYYCFGCGAGGNALGFVMDHDNLDFPQAVEELARAAGMEVPREQGRRDQKPRQPTDSPLYPLLDAASEFYRQALRSHPSRKAAVDYLKGRGLSGEIARDFGLGFAPPGWDNLLKHLGADTLQQKVMIDAGLLIENAESGKRYDRFRDRVMFPIRDSRGRIIAFGGRVLGDDKPKYLNSPETPVFHKGQELYGLYEARKHNRNLDEIIVVEGYMDVIALAQQGLRNAVATLGTATSEEHLKRLFRVVPSVLFCFDGDQAGRKAAWRALESTLSNLQDGRRARFLFLPEGEDPDSLVRAEGTDAFMARINQHSQPLADYFFEQLGVEADPRSLEGKAHMATLAAPLIEKIPGANLRQLMRNRLKEITGLDPQQVEQLAQQAPATSSMPDYDPGYDYDAMASYTPDYGDMPQHDYAPVHQEQAWKPNKGGSKKPWSDKPWDKNRKGGKPWQQRDEAPPRVPAPVEPPTLAALRTLLHHPLLAGKVEDASHFADEEHLYSQLLVALIEAAQKNPGLSSMQLIARWHGTEQGRLLRALAEKEWLIVADNLEQQFFDTITSLSARQRERSLEQLLRKSRQSELTSEEKTQLLALLSRNVPAQTPTSSGA.

Residues 40–64 (CPFHKEKTPSFTVSPDKQFYYCFGC) form a CHC2-type zinc finger. The segment at 94–115 (GMEVPREQGRRDQKPRQPTDSP) is disordered. Over residues 97 to 110 (VPREQGRRDQKPRQ) the composition is skewed to basic and acidic residues. In terms of domain architecture, Toprim spans 261–343 (DEIIVVEGYM…GRRARFLFLP (83 aa)). Residues Glu-267, Asp-311, and Asp-313 each contribute to the Mg(2+) site. 2 disordered regions span residues 425-449 (DPQQ…DPGY) and 476-519 (QAWK…APVE). A compositionally biased stretch (polar residues) spans 428 to 442 (QVEQLAQQAPATSSM). Basic and acidic residues predominate over residues 488 to 498 (PWSDKPWDKNR).

The protein belongs to the DnaG primase family. As to quaternary structure, monomer. Interacts with DnaB. Requires Zn(2+) as cofactor. Mg(2+) serves as cofactor.

It carries out the reaction ssDNA + n NTP = ssDNA/pppN(pN)n-1 hybrid + (n-1) diphosphate.. RNA polymerase that catalyzes the synthesis of short RNA molecules used as primers for DNA polymerase during DNA replication. This is DNA primase from Pseudomonas putida (strain ATCC 47054 / DSM 6125 / CFBP 8728 / NCIMB 11950 / KT2440).